Reading from the N-terminus, the 331-residue chain is Methionyl-tRNA formyltransferase (331 aa).

Residue 110 to 113 (SLLP) participates in (6S)-5,6,7,8-tetrahydrofolate binding. The segment at 312-331 (HAPAERVSAAGSPAGAGGAP) is disordered.

This sequence belongs to the Fmt family.

The enzyme catalyses L-methionyl-tRNA(fMet) + (6R)-10-formyltetrahydrofolate = N-formyl-L-methionyl-tRNA(fMet) + (6S)-5,6,7,8-tetrahydrofolate + H(+). In terms of biological role, attaches a formyl group to the free amino group of methionyl-tRNA(fMet). The formyl group appears to play a dual role in the initiator identity of N-formylmethionyl-tRNA by promoting its recognition by IF2 and preventing the misappropriation of this tRNA by the elongation apparatus. This is Methionyl-tRNA formyltransferase from Frankia alni (strain DSM 45986 / CECT 9034 / ACN14a).